The following is a 276-amino-acid chain: N-alpha-acetyltransferase 60 (276 aa).

Residues 34–239 (VQLRFLVPDD…WTLLDHIKHY (206 aa)) enclose the N-acetyltransferase domain. A substrate-binding site is contributed by Tyr59. Tyr139 is a catalytic residue. Substrate is bound at residue Leu141. Acetyl-CoA-binding positions include 143-145 (LGV) and 151-156 (RNGIGS). His180 is a catalytic residue. Acetyl-CoA contacts are provided by residues Asn185 and 192–195 (YEKR). The segment at 204–215 (PYYYNIRGKGKD) is required for homodimerization. Tyr207 provides a ligand contact to substrate.

Belongs to the acetyltransferase family. NAA60 subfamily.

It carries out the reaction N-terminal L-methionyl-[transmembrane protein] + acetyl-CoA = N-terminal N(alpha)-acetyl-L-methionyl-[transmembrane protein] + CoA + H(+). It catalyses the reaction L-lysyl-[protein] + acetyl-CoA = N(6)-acetyl-L-lysyl-[protein] + CoA + H(+). Its function is as follows. Displays alpha (N-terminal) acetyltransferase activity towards a range of N-terminal sequences including those starting with Met-Lys, Met-Val, Met-Ala and Met-Met. Required for normal chromosomal segregation during anaphase. In terms of biological role, shows histone acetyltransferase activity toward free histones. Functionally, does not show histone acetyltransferase activity toward free histones. This is N-alpha-acetyltransferase 60 from Drosophila melanogaster (Fruit fly).